We begin with the raw amino-acid sequence, 381 residues long: Alkanesulfonate monooxygenase (381 aa).

This sequence belongs to the SsuD family. Homotetramer.

The enzyme catalyses an alkanesulfonate + FMNH2 + O2 = an aldehyde + FMN + sulfite + H2O + 2 H(+). Its function is as follows. Catalyzes the desulfonation of aliphatic sulfonates. This chain is Alkanesulfonate monooxygenase, found in Escherichia coli O6:H1 (strain CFT073 / ATCC 700928 / UPEC).